The following is a 586-amino-acid chain: Thioredoxin domain-containing protein 3 (586 aa).

Positions 10–116 (LQSVVNSQNL…NRKVITLIDE (107 aa)) constitute a Thioredoxin domain. A disulfide bridge links Cys-39 with Cys-42. NDK regions lie at residues 157 to 254 (MAII…VLEE), 312 to 452 (VQTT…STLA), and 453 to 586 (LIKP…NPEN).

This sequence in the C-terminal section; belongs to the NDK family. Monomer. In terms of tissue distribution, testis-specific. Expressed mainly in round spermatids.

It is found in the cytoplasm. Functionally, probably required during the final stages of sperm tail maturation in the testis and/or epididymis, where extensive disulfide bonding of fibrous sheath (FS) proteins occurs. In vitro, it has neither nucleoside diphosphate kinase (NDPK) activity nor reducing activity on disulfide bonds. Exhibits a 3'-5' exonuclease activity with a preference for single-stranded DNA, suggesting roles in DNA proofreading and repair. In Mus musculus (Mouse), this protein is Thioredoxin domain-containing protein 3 (Nme8).